The chain runs to 156 residues: Small ribosomal subunit protein uS7 (156 aa).

It belongs to the universal ribosomal protein uS7 family. Part of the 30S ribosomal subunit. Contacts proteins S9 and S11.

In terms of biological role, one of the primary rRNA binding proteins, it binds directly to 16S rRNA where it nucleates assembly of the head domain of the 30S subunit. Is located at the subunit interface close to the decoding center, probably blocks exit of the E-site tRNA. This Leptothrix cholodnii (strain ATCC 51168 / LMG 8142 / SP-6) (Leptothrix discophora (strain SP-6)) protein is Small ribosomal subunit protein uS7.